A 154-amino-acid chain; its full sequence is MAYYWIAAAVVILDQWTKWLVVRYMQLGESIPIIDNVLYITSHRNRGAAWGMLEGQFWLFYLITVIVVAAIVIYIRRLKPSERLAGVGLGLMLGGAIGNFLDRVFRKEVVDFIHAYIGTYSFPVFNVADSALTVGVILLFVHMFFFATPEKGNE.

The next 2 membrane-spanning stretches (helical) occupy residues 55–75 and 85–105; these read GQFW…VIYI and AGVG…DRVF. Catalysis depends on residues Asp-111 and Asp-129. The helical transmembrane segment at 127-147 threads the bilayer; that stretch reads VADSALTVGVILLFVHMFFFA.

Belongs to the peptidase A8 family.

The protein resides in the cell membrane. It carries out the reaction Release of signal peptides from bacterial membrane prolipoproteins. Hydrolyzes -Xaa-Yaa-Zaa-|-(S,diacylglyceryl)Cys-, in which Xaa is hydrophobic (preferably Leu), and Yaa (Ala or Ser) and Zaa (Gly or Ala) have small, neutral side chains.. Its pathway is protein modification; lipoprotein biosynthesis (signal peptide cleavage). In terms of biological role, this protein specifically catalyzes the removal of signal peptides from prolipoproteins. The chain is Lipoprotein signal peptidase from Geobacillus kaustophilus (strain HTA426).